The chain runs to 332 residues: Protein pbn1 (332 aa).

Residues 1–301 are Lumenal-facing; sequence MDLQRTNQDT…SIPIADLSYK (301 aa). N-linked (GlcNAc...) asparagine glycosylation is found at Asn-36, Asn-56, Asn-112, and Asn-206. The chain crosses the membrane as a helical span at residues 302 to 324; it reads HVVEWVTNGVAIFSFFYLLLYLW. The Cytoplasmic segment spans residues 325–332; that stretch reads KRFRYAKD.

The protein belongs to the PIGX family.

It is found in the endoplasmic reticulum membrane. The protein operates within glycolipid biosynthesis; glycosylphosphatidylinositol-anchor biosynthesis. In terms of biological role, required for proper folding and/or the stability of a subset of proteins in the endoplasmic reticulum. Component of glycosylphosphatidylinositol-mannosyltransferase 1 which transfers the first of the 4 mannoses in the GPI-anchor precursors during GPI-anchor biosynthesis. Probably acts by stabilizing the mannosyltransferase gpi14. This Schizosaccharomyces pombe (strain 972 / ATCC 24843) (Fission yeast) protein is Protein pbn1 (pbn1).